The chain runs to 157 residues: Cytochrome c-type biogenesis protein CcmE (157 aa).

Residues 1-8 are Cytoplasmic-facing; sequence MHPVRKQR. The helical; Signal-anchor for type II membrane protein transmembrane segment at 9–29 threads the bilayer; the sequence is LMTVLFIVIASSVAVGLMVFA. Residues 30 to 157 lie on the Periplasmic side of the membrane; sequence LSKNLNLFYP…KTCEGLDYAS (128 aa). Residues His124 and Tyr128 each contribute to the heme site.

It belongs to the CcmE/CycJ family.

The protein localises to the cell inner membrane. In terms of biological role, heme chaperone required for the biogenesis of c-type cytochromes. Transiently binds heme delivered by CcmC and transfers the heme to apo-cytochromes in a process facilitated by CcmF and CcmH. The sequence is that of Cytochrome c-type biogenesis protein CcmE from Saccharophagus degradans (strain 2-40 / ATCC 43961 / DSM 17024).